The chain runs to 569 residues: Cytochrome P450 monooxygenase abl1 (569 aa).

Cys464 lines the heme pocket.

Belongs to the cytochrome P450 family. Heme is required as a cofactor.

It participates in hormone biosynthesis. Its function is as follows. Cytochrome P450 monooxygenase; part of the gene cluster that mediates the biosynthesis of abscisic acid (ABA), a phytohormone that acts antagonistically toward salicylic acid (SA), jasmonic acid (JA) and ethylene (ETH) signaling, to impede plant defense responses. The first step of the pathway catalyzes the reaction from farnesyl diphosphate to alpha-ionylideneethane performed by the alpha-ionylideneethane synthase abl3 via a three-step reaction mechanism involving 2 neutral intermediates, beta-farnesene and allofarnesene. The cytochrome P450 monooxygenase abl1 might then be involved in the conversion of alpha-ionylideneethane to alpha-ionylideneacetic acid. Alpha-ionylideneacetic acid is further converted to abscisic acid in 2 steps involving the cytochrome P450 monooxygenase abl2 and the short-chain dehydrogenase/reductase abl4, via the intermediates 1'-deoxy-ABA or 1',4'-trans-diol-ABA, depending on the order of action of these 2 enzymes. Abl2 is responsible for the hydroxylation of carbon atom C-1' and abl4 might be involved in the oxidation of the C-4' carbon atom. This chain is Cytochrome P450 monooxygenase abl1, found in Leptosphaeria maculans (strain JN3 / isolate v23.1.3 / race Av1-4-5-6-7-8) (Blackleg fungus).